Here is a 660-residue protein sequence, read N- to C-terminus: Probable E3 ubiquitin ligase complex SCF subunit sconB (660 aa).

Basic and acidic residues predominate over residues 1–13; it reads MHNENSVLRDAKE. Disordered stretches follow at residues 1–34 and 86–108; these read MHNENSVLRDAKESLFNPTPRKQGLPEDNTMTPY and LGTGISKSAGPPPRPDLKCRRQA. The F-box domain maps to 175–221; that stretch reads IDFITALPPEISFKILSYLDTASLCRAAQVSRGWKCLADDDVVWHRM. WD repeat units follow at residues 340–379, 381–419, 421–457, 459–500, 542–586, 587–626, and 629–660; these read GHTNGVMCLQFEDNILATGSYDTTIKIWDMETGEELRTLT, HTSGIRCLQFDETKLISGSIDRTLKVWNWRTGECISTYT, HLGGIIGLHFQNSILASGSTDKTVKIWNFEDKSTFLL, GHSD…RTFQ, SQVS…CLRT, FFGHLEGVWALSADTLRIVSGAEDRMVKIWDPRTGKCERT, and GHSGPVTCVGLGDSCFVTGSEDCEVRIYSFKN. The segment at 521–553 is disordered; that stretch reads GHDASHEEDSNASVSGDESPSSQVSCSPTAAFF. The segment covering 531–548 has biased composition (polar residues); the sequence is NASVSGDESPSSQVSCSP.

This sequence belongs to the WD repeat MET30/SCONB/SCON-2 family. Component of the SCF(sconB) E3 ubiquitin ligase complex.

It functions in the pathway protein modification; protein ubiquitination. Its function is as follows. Component of the SCF(sconB) E3 ubiquitin ligase complex involved in the regulation of sulfur metabolite repression, probably by mediating the inactivation or degradation of the metR transcription factor. This chain is Probable E3 ubiquitin ligase complex SCF subunit sconB (sconB), found in Talaromyces marneffei (strain ATCC 18224 / CBS 334.59 / QM 7333) (Penicillium marneffei).